Consider the following 495-residue polypeptide: Glucose-6-phosphate 1-dehydrogenase (495 aa).

S1 carries the post-translational modification N-acetylserine. NADP(+) contacts are provided by residues G15–R22, R49, and K149. Residues K149, H179–K183, E217, and D236 contribute to the D-glucose 6-phosphate site. Catalysis depends on H241, which acts as the Proton acceptor. R332 provides a ligand contact to NADP(+). Residue K335 participates in D-glucose 6-phosphate binding. NADP(+) is bound by residues K341, R345, and R367. Q369 serves as a coordination point for D-glucose 6-phosphate. NADP(+) contacts are provided by residues Y375–K377, D395–T397, and K463.

This sequence belongs to the glucose-6-phosphate dehydrogenase family.

The enzyme catalyses D-glucose 6-phosphate + NADP(+) = 6-phospho-D-glucono-1,5-lactone + NADPH + H(+). Its pathway is carbohydrate degradation; pentose phosphate pathway; D-ribulose 5-phosphate from D-glucose 6-phosphate (oxidative stage): step 1/3. Its function is as follows. Catalyzes the rate-limiting step of the oxidative pentose-phosphate pathway, which represents a route for the dissimilation of carbohydrates besides glycolysis. The main function of this enzyme is to provide reducing power (NADPH) and pentose phosphates for fatty acid and nucleic acid synthesis. The chain is Glucose-6-phosphate 1-dehydrogenase from Cyberlindnera jadinii (Torula yeast).